Reading from the N-terminus, the 39-residue chain is Bacteriocin SRCAM 602 (39 aa).

It belongs to the bacteriocin class IIA/YGNGV family.

The protein localises to the secreted. Functionally, bacteriocin with antibacterial activity against C.jejuni. The sequence is that of Bacteriocin SRCAM 602 from Paenibacillus polymyxa (Bacillus polymyxa).